A 261-amino-acid chain; its full sequence is Non-structural protein 2a (261 aa).

This sequence belongs to the coronaviruses ns2a protein family.

Its subcellular location is the host cytoplasm. In terms of biological role, not essential for virus replication in transformed murine cells. The sequence is that of Non-structural protein 2a from Mus musculus (Mouse).